We begin with the raw amino-acid sequence, 708 residues long: Elongation factor G (708 aa).

The tr-type G domain maps to 8-290 (KRYRNIGISA…AVIQYLPAPM (283 aa)). GTP-binding positions include 17 to 24 (AHIDAGKT), 88 to 92 (DTPGH), and 142 to 145 (NKMD).

It belongs to the TRAFAC class translation factor GTPase superfamily. Classic translation factor GTPase family. EF-G/EF-2 subfamily.

It is found in the cytoplasm. Catalyzes the GTP-dependent ribosomal translocation step during translation elongation. During this step, the ribosome changes from the pre-translocational (PRE) to the post-translocational (POST) state as the newly formed A-site-bound peptidyl-tRNA and P-site-bound deacylated tRNA move to the P and E sites, respectively. Catalyzes the coordinated movement of the two tRNA molecules, the mRNA and conformational changes in the ribosome. The polypeptide is Elongation factor G (Psychrobacter cryohalolentis (strain ATCC BAA-1226 / DSM 17306 / VKM B-2378 / K5)).